We begin with the raw amino-acid sequence, 195 residues long: Probable cobalt-precorrin-6B C(15)-methyltransferase (decarboxylating) (195 aa).

S-adenosyl-L-methionine is bound by residues T24, 48 to 52 (GCGTG), D72, and A101.

Belongs to the methyltransferase superfamily. Archaeal-type CbiT family.

It carries out the reaction Co-precorrin-6B + S-adenosyl-L-methionine = Co-precorrin-7 + S-adenosyl-L-homocysteine + CO2. It participates in cofactor biosynthesis; adenosylcobalamin biosynthesis; cob(II)yrinate a,c-diamide from sirohydrochlorin (anaerobic route): step 8/10. In terms of biological role, catalyzes the methylation of C-15 in cobalt-precorrin-6B followed by the decarboxylation of C-12 to form cobalt-precorrin-7. This Pyrobaculum calidifontis (strain DSM 21063 / JCM 11548 / VA1) protein is Probable cobalt-precorrin-6B C(15)-methyltransferase (decarboxylating).